Here is a 267-residue protein sequence, read N- to C-terminus: 4-diphosphocytidyl-2-C-methyl-D-erythritol kinase (267 aa).

The active site involves lysine 8. 90-100 contributes to the ATP binding site; it reads PIGAGLGGGSS. Residue aspartate 132 is part of the active site.

This sequence belongs to the GHMP kinase family. IspE subfamily.

The catalysed reaction is 4-CDP-2-C-methyl-D-erythritol + ATP = 4-CDP-2-C-methyl-D-erythritol 2-phosphate + ADP + H(+). The protein operates within isoprenoid biosynthesis; isopentenyl diphosphate biosynthesis via DXP pathway; isopentenyl diphosphate from 1-deoxy-D-xylulose 5-phosphate: step 3/6. Functionally, catalyzes the phosphorylation of the position 2 hydroxy group of 4-diphosphocytidyl-2C-methyl-D-erythritol. The protein is 4-diphosphocytidyl-2-C-methyl-D-erythritol kinase of Azobacteroides pseudotrichonymphae genomovar. CFP2.